The following is a 372-amino-acid chain: N-methyl-L-tryptophan oxidase (372 aa).

4–34 (DLIIIGSGSVGAAAGYYATRAGLNVLMTDAH) serves as a coordination point for FAD. S-8alpha-FAD cysteine is present on Cys-308.

Belongs to the MSOX/MTOX family. MTOX subfamily. In terms of assembly, monomer. The cofactor is FAD.

It carries out the reaction N(alpha)-methyl-L-tryptophan + O2 + H2O = L-tryptophan + formaldehyde + H2O2. Functionally, catalyzes the oxidative demethylation of N-methyl-L-tryptophan. The sequence is that of N-methyl-L-tryptophan oxidase from Shigella sonnei (strain Ss046).